We begin with the raw amino-acid sequence, 525 residues long: MSL complex subunit 3 (525 aa).

The Tudor-knot domain occupies 13–72 (SGEKVLCFEPDPTKARVLYDAKIIDVIIGKDEKGRKIPEYLIHFNGWNRSWDRWAAEEHV). Disordered regions lie at residues 119 to 148 (KEKSKNDENSVSSTCHESCGEKNGGIKEHR) and 302 to 383 (TTTT…DTSA). Over residues 136-146 (SCGEKNGGIKE) the composition is skewed to basic and acidic residues. One can recognise an MRG domain in the interval 172–521 (DERTITIDIP…CEAHYSTKNP (350 aa)). The segment at 294-444 (FFLPIKESTT…WKLVPDNYPP (151 aa)) is required for the histone acetyltransferase activity of the MSL complex. A phosphoserine mark is found at S313 and S315. The segment covering 320–332 (NPSTPQSTESQPP) has biased composition (low complexity). 2 positions are modified to phosphoserine: S371 and S404. Phosphothreonine is present on T409. Phosphoserine is present on residues S411 and S415.

Component of the MSL histone acetyltransferase complex at least composed of the KAT8/MOF, MSL1/hampin, MSL2 and MSL3. Interacts (via the MRG domain) with MSL1 and KAT8/MOF. As to expression, in testis, expression is mostly restricted to the spermatocyte stage and only in a small portion of spermatogonia.

The protein resides in the nucleus. Functionally, non-catalytic component of the MSL histone acetyltransferase complex, a multiprotein complex that mediates the majority of histone H4 acetylation at 'Lys-16' (H4K16ac), an epigenetic mark that prevents chromatin compaction. The MSL complex is required for chromosome stability and genome integrity by maintaining homeostatic levels of H4K16ac. The MSL complex is also involved in gene dosage by promoting up-regulation of genes expressed by the X chromosome. X up-regulation is required to compensate for autosomal biallelic expression. The MSL complex also participates in gene dosage compensation by promoting expression of Tsix non-coding RNA. Acts as a histone reader that specifically recognizes and binds histone H4 monomethylated at 'Lys-20' (H4K20Me1) in a DNA-dependent manner and is proposed to be involved in chromosomal targeting of the MSL complex. May play a role X inactivation in females. This is MSL complex subunit 3 from Mus musculus (Mouse).